Consider the following 71-residue polypeptide: DNA-directed RNA polymerase subunit 10-like protein (71 aa).

Residues Cys7, Cys10, Cys44, and Cys45 each coordinate Zn(2+).

Belongs to the archaeal Rpo10/eukaryotic RPB10 RNA polymerase subunit family. Interacts with IYO.

The protein localises to the nucleus. The polypeptide is DNA-directed RNA polymerase subunit 10-like protein (Arabidopsis thaliana (Mouse-ear cress)).